Here is a 238-residue protein sequence, read N- to C-terminus: Small ribosomal subunit protein uS2c (238 aa).

The protein belongs to the universal ribosomal protein uS2 family.

It is found in the plastid. It localises to the chloroplast. The sequence is that of Small ribosomal subunit protein uS2c (rps2) from Jasminum nudiflorum (Winter jasmine).